A 114-amino-acid polypeptide reads, in one-letter code: Phosphoribosyl-AMP cyclohydrolase (114 aa).

Residue Asp76 coordinates Mg(2+). Cys77 contributes to the Zn(2+) binding site. Residues Asp78 and Asp80 each coordinate Mg(2+). Residues Cys93 and Cys100 each contribute to the Zn(2+) site.

The protein belongs to the PRA-CH family. Homodimer. Mg(2+) is required as a cofactor. Requires Zn(2+) as cofactor.

The protein localises to the cytoplasm. The enzyme catalyses 1-(5-phospho-beta-D-ribosyl)-5'-AMP + H2O = 1-(5-phospho-beta-D-ribosyl)-5-[(5-phospho-beta-D-ribosylamino)methylideneamino]imidazole-4-carboxamide. It participates in amino-acid biosynthesis; L-histidine biosynthesis; L-histidine from 5-phospho-alpha-D-ribose 1-diphosphate: step 3/9. Its function is as follows. Catalyzes the hydrolysis of the adenine ring of phosphoribosyl-AMP. The protein is Phosphoribosyl-AMP cyclohydrolase of Streptococcus gordonii (strain Challis / ATCC 35105 / BCRC 15272 / CH1 / DL1 / V288).